The primary structure comprises 376 residues: Chaperone protein DnaJ (376 aa).

The J domain occupies 5-70; it reads DYYEVLGVGR…DKKAAYDQFG (66 aa). The segment at 132–210 adopts a CR-type zinc-finger fold; that stretch reads GLTKELRIPT…CHGDGRVEKS (79 aa). Positions 145, 148, 162, 165, 184, 187, 198, and 201 each coordinate Zn(2+). CXXCXGXG motif repeat units lie at residues 145–152, 162–169, 184–191, and 198–205; these read CDLCDGSG, CTTCHGQG, CPTCHGRG, and CTKCHGDG.

Belongs to the DnaJ family. Homodimer. It depends on Zn(2+) as a cofactor.

Its subcellular location is the cytoplasm. Functionally, participates actively in the response to hyperosmotic and heat shock by preventing the aggregation of stress-denatured proteins and by disaggregating proteins, also in an autonomous, DnaK-independent fashion. Unfolded proteins bind initially to DnaJ; upon interaction with the DnaJ-bound protein, DnaK hydrolyzes its bound ATP, resulting in the formation of a stable complex. GrpE releases ADP from DnaK; ATP binding to DnaK triggers the release of the substrate protein, thus completing the reaction cycle. Several rounds of ATP-dependent interactions between DnaJ, DnaK and GrpE are required for fully efficient folding. Also involved, together with DnaK and GrpE, in the DNA replication of plasmids through activation of initiation proteins. The polypeptide is Chaperone protein DnaJ (Shewanella putrefaciens (strain CN-32 / ATCC BAA-453)).